The sequence spans 247 residues: Leucyl/phenylalanyl-tRNA--protein transferase (247 aa).

It belongs to the L/F-transferase family.

Its subcellular location is the cytoplasm. The catalysed reaction is N-terminal L-lysyl-[protein] + L-leucyl-tRNA(Leu) = N-terminal L-leucyl-L-lysyl-[protein] + tRNA(Leu) + H(+). It carries out the reaction N-terminal L-arginyl-[protein] + L-leucyl-tRNA(Leu) = N-terminal L-leucyl-L-arginyl-[protein] + tRNA(Leu) + H(+). It catalyses the reaction L-phenylalanyl-tRNA(Phe) + an N-terminal L-alpha-aminoacyl-[protein] = an N-terminal L-phenylalanyl-L-alpha-aminoacyl-[protein] + tRNA(Phe). Functions in the N-end rule pathway of protein degradation where it conjugates Leu, Phe and, less efficiently, Met from aminoacyl-tRNAs to the N-termini of proteins containing an N-terminal arginine or lysine. This chain is Leucyl/phenylalanyl-tRNA--protein transferase, found in Solidesulfovibrio magneticus (strain ATCC 700980 / DSM 13731 / RS-1) (Desulfovibrio magneticus).